The sequence spans 665 residues: Macrolide export ATP-binding/permease protein MacB (665 aa).

Residues 17–255 form the ABC transporter domain; the sequence is MQVKGLIREF…VAQFSSIIDK (239 aa). 53-60 contacts ATP; it reads GQSGSGKS. A run of 4 helical transmembrane segments spans residues 287 to 307, 544 to 564, 588 to 608, and 630 to 650; these read LLTMLGIIIGIASVVSVVGLG, IAIISLIVGGIGVMNIMLVSV, FLIEAVLVCILGGLLGIGMAF, and SIIAAFVCSTLIGVVFGFLPA.

The protein belongs to the ABC transporter superfamily. Macrolide exporter (TC 3.A.1.122) family. Homodimer. Part of the tripartite efflux system MacAB-TolC, which is composed of an inner membrane transporter, MacB, a periplasmic membrane fusion protein, MacA, and an outer membrane component, TolC. The complex forms a large protein conduit and can translocate molecules across both the inner and outer membranes. Interacts with MacA.

The protein resides in the cell inner membrane. In terms of biological role, part of the tripartite efflux system MacAB-TolC. MacB is a non-canonical ABC transporter that contains transmembrane domains (TMD), which form a pore in the inner membrane, and an ATP-binding domain (NBD), which is responsible for energy generation. Confers resistance against macrolides. This is Macrolide export ATP-binding/permease protein MacB from Psychrobacter arcticus (strain DSM 17307 / VKM B-2377 / 273-4).